A 249-amino-acid polypeptide reads, in one-letter code: General transcription factor IIF subunit 2 (249 aa).

Alanine 2 carries the post-translational modification N-acetylalanine. N6-acetyllysine is present on residues lysine 22, lysine 33, and lysine 137. Residue serine 142 is modified to Phosphoserine. The DNA site is built by glycine 227 and histidine 229. The residue at position 248 (serine 248) is a Phosphoserine.

Belongs to the TFIIF beta subunit family. As to quaternary structure, heterodimer of an alpha and a beta subunit. Interacts with HTATSF1 and URI1. Interacts with GPBP1. Interacts with GTF2B (via N-terminus); this interaction is inhibited in presence of GTF2F1. Part of TBP-based Pol II pre-initiation complex (PIC), in which Pol II core assembles with general transcription factors and other specific initiation factors including GTF2E1, GTF2E2, GTF2F1, GTF2F2, TCEA1, ERCC2, ERCC3, GTF2H2, GTF2H3, GTF2H4, GTF2H5, GTF2A1, GTF2A2, GTF2B and TBP; this large multi-subunit PIC complex mediates DNA unwinding and targets Pol II core to the transcription start site where the first phosphodiester bond forms.

Its subcellular location is the nucleus. Functionally, TFIIF is a general transcription initiation factor that binds to RNA polymerase II and helps to recruit it to the initiation complex in collaboration with TFIIB. This chain is General transcription factor IIF subunit 2 (Gtf2f2), found in Mus musculus (Mouse).